Consider the following 344-residue polypeptide: Biotin synthase (344 aa).

The 225-residue stretch at 36–260 folds into the Radical SAM core domain; the sequence is NQIQISTLLS…MMPTSYIRLS (225 aa). 3 residues coordinate [4Fe-4S] cluster: Cys51, Cys55, and Cys58. 4 residues coordinate [2Fe-2S] cluster: Cys95, Cys126, Cys186, and Arg258.

Belongs to the radical SAM superfamily. Biotin synthase family. As to quaternary structure, homodimer. It depends on [4Fe-4S] cluster as a cofactor. [2Fe-2S] cluster serves as cofactor.

It catalyses the reaction (4R,5S)-dethiobiotin + (sulfur carrier)-SH + 2 reduced [2Fe-2S]-[ferredoxin] + 2 S-adenosyl-L-methionine = (sulfur carrier)-H + biotin + 2 5'-deoxyadenosine + 2 L-methionine + 2 oxidized [2Fe-2S]-[ferredoxin]. The protein operates within cofactor biosynthesis; biotin biosynthesis; biotin from 7,8-diaminononanoate: step 2/2. Functionally, catalyzes the conversion of dethiobiotin (DTB) to biotin by the insertion of a sulfur atom into dethiobiotin via a radical-based mechanism. The protein is Biotin synthase of Buchnera aphidicola subsp. Baizongia pistaciae (strain Bp).